A 75-amino-acid polypeptide reads, in one-letter code: Putative antitoxin VapB17 (75 aa).

Its function is as follows. Putative antitoxin component of a possible type II toxin-antitoxin (TA) system. The cognate toxin is VapC17. The sequence is that of Putative antitoxin VapB17 (vapB17) from Mycobacterium tuberculosis (strain CDC 1551 / Oshkosh).